The chain runs to 140 residues: Nucleoside diphosphate kinase (140 aa).

6 residues coordinate ATP: lysine 11, phenylalanine 59, arginine 87, threonine 93, arginine 104, and asparagine 114. Histidine 117 serves as the catalytic Pros-phosphohistidine intermediate.

The protein belongs to the NDK family. As to quaternary structure, homotetramer. Mg(2+) serves as cofactor.

It localises to the cytoplasm. The catalysed reaction is a 2'-deoxyribonucleoside 5'-diphosphate + ATP = a 2'-deoxyribonucleoside 5'-triphosphate + ADP. It carries out the reaction a ribonucleoside 5'-diphosphate + ATP = a ribonucleoside 5'-triphosphate + ADP. In terms of biological role, major role in the synthesis of nucleoside triphosphates other than ATP. The ATP gamma phosphate is transferred to the NDP beta phosphate via a ping-pong mechanism, using a phosphorylated active-site intermediate. The polypeptide is Nucleoside diphosphate kinase (Bartonella tribocorum (strain CIP 105476 / IBS 506)).